Consider the following 533-residue polypeptide: Probable protein kinase UbiB (533 aa).

Residues 24 to 44 form a helical membrane-spanning segment; that stretch reads LILELPMLPWWLRLLGATLPW. Positions 126 to 494 constitute a Protein kinase domain; sequence RFEREPLASA…WKGSRHDWLG (369 aa). ATP is bound by residues 132 to 140 and Lys154; that span reads LASASVAQV. Asp289 (proton acceptor) is an active-site residue. A helical membrane pass occupies residues 510–530; it reads LGQQLEAWPAWVMLAGGVFLI.

Belongs to the ABC1 family. UbiB subfamily.

It is found in the cell inner membrane. It participates in cofactor biosynthesis; ubiquinone biosynthesis [regulation]. In terms of biological role, is probably a protein kinase regulator of UbiI activity which is involved in aerobic coenzyme Q (ubiquinone) biosynthesis. In Pseudomonas aeruginosa (strain LESB58), this protein is Probable protein kinase UbiB.